We begin with the raw amino-acid sequence, 561 residues long: uncharacterized protein (561 aa).

A run of 6 helical transmembrane segments spans residues 10 to 29 (LLRN…GYWI), 34 to 56 (FGSL…SQIG), 63 to 80 (LKTV…FQSG), 95 to 117 (VLMA…RMFH), 122 to 144 (LAAG…SSAL), and 164 to 186 (GYAV…ILPW). RCK C-terminal domains are found at residues 205–287 (QGMA…LLGE) and 294–376 (HDMD…ELGS). Helical transmembrane passes span 386-403 (LVFH…GLIV), 407-429 (GSIP…FGWY), 442-464 (AAST…LQTG), 479-501 (FMLG…RYVL), and 538-560 (SFAI…VVAF).

This sequence belongs to the AAE transporter (TC 2.A.81) family.

It localises to the cell membrane. This is an uncharacterized protein from Zymomonas mobilis subsp. mobilis (strain ATCC 31821 / ZM4 / CP4).